Here is a 735-residue protein sequence, read N- to C-terminus: Phosphoribosylformylglycinamidine synthase subunit PurL (735 aa).

Histidine 48 is an active-site residue. Residues tyrosine 51 and lysine 90 each coordinate ATP. Glutamate 92 is a Mg(2+) binding site. Substrate is bound by residues 93-96 (SHNH) and arginine 115. Histidine 94 (proton acceptor) is an active-site residue. Aspartate 116 provides a ligand contact to Mg(2+). Glutamine 239 serves as a coordination point for substrate. Aspartate 267 provides a ligand contact to Mg(2+). 311-313 (ESQ) contacts substrate. ATP is bound by residues aspartate 492 and glycine 529. Asparagine 530 is a Mg(2+) binding site. A substrate-binding site is contributed by serine 532.

Belongs to the FGAMS family. Monomer. Part of the FGAM synthase complex composed of 1 PurL, 1 PurQ and 2 PurS subunits.

Its subcellular location is the cytoplasm. The catalysed reaction is N(2)-formyl-N(1)-(5-phospho-beta-D-ribosyl)glycinamide + L-glutamine + ATP + H2O = 2-formamido-N(1)-(5-O-phospho-beta-D-ribosyl)acetamidine + L-glutamate + ADP + phosphate + H(+). It participates in purine metabolism; IMP biosynthesis via de novo pathway; 5-amino-1-(5-phospho-D-ribosyl)imidazole from N(2)-formyl-N(1)-(5-phospho-D-ribosyl)glycinamide: step 1/2. Functionally, part of the phosphoribosylformylglycinamidine synthase complex involved in the purines biosynthetic pathway. Catalyzes the ATP-dependent conversion of formylglycinamide ribonucleotide (FGAR) and glutamine to yield formylglycinamidine ribonucleotide (FGAM) and glutamate. The FGAM synthase complex is composed of three subunits. PurQ produces an ammonia molecule by converting glutamine to glutamate. PurL transfers the ammonia molecule to FGAR to form FGAM in an ATP-dependent manner. PurS interacts with PurQ and PurL and is thought to assist in the transfer of the ammonia molecule from PurQ to PurL. This Bradyrhizobium sp. (strain BTAi1 / ATCC BAA-1182) protein is Phosphoribosylformylglycinamidine synthase subunit PurL.